We begin with the raw amino-acid sequence, 421 residues long: Serine--tRNA ligase (421 aa).

229-231 (TAE) contributes to the L-serine binding site. 260-262 (RAE) is a binding site for ATP. Residue glutamate 283 coordinates L-serine. 347–350 (EISS) is a binding site for ATP. Serine 383 serves as a coordination point for L-serine.

This sequence belongs to the class-II aminoacyl-tRNA synthetase family. Type-1 seryl-tRNA synthetase subfamily. In terms of assembly, homodimer. The tRNA molecule binds across the dimer.

It localises to the cytoplasm. The enzyme catalyses tRNA(Ser) + L-serine + ATP = L-seryl-tRNA(Ser) + AMP + diphosphate + H(+). It catalyses the reaction tRNA(Sec) + L-serine + ATP = L-seryl-tRNA(Sec) + AMP + diphosphate + H(+). Its pathway is aminoacyl-tRNA biosynthesis; selenocysteinyl-tRNA(Sec) biosynthesis; L-seryl-tRNA(Sec) from L-serine and tRNA(Sec): step 1/1. In terms of biological role, catalyzes the attachment of serine to tRNA(Ser). Is also able to aminoacylate tRNA(Sec) with serine, to form the misacylated tRNA L-seryl-tRNA(Sec), which will be further converted into selenocysteinyl-tRNA(Sec). The sequence is that of Serine--tRNA ligase from Desulfitobacterium hafniense (strain Y51).